A 336-amino-acid polypeptide reads, in one-letter code: Ornithine carbamoyltransferase, catabolic (336 aa).

Carbamoyl phosphate is bound by residues 57–60, Gln84, Arg108, and 135–138; these read STRT and HPTQ. L-ornithine-binding positions include Asn168, Asp232, and 236–237; that span reads SM. Carbamoyl phosphate is bound by residues 274 to 275 and Arg321; that span reads CL.

This sequence belongs to the aspartate/ornithine carbamoyltransferase superfamily. OTCase family. As to quaternary structure, nonameric or dodecamer (tetramer of trimers).

It localises to the cytoplasm. It catalyses the reaction carbamoyl phosphate + L-ornithine = L-citrulline + phosphate + H(+). It functions in the pathway amino-acid degradation; L-arginine degradation via ADI pathway; carbamoyl phosphate from L-arginine: step 2/2. With respect to regulation, inhibited by 2-aminopentanoic acid (norvaline). Activated by phosphate and nucleoside monophosphates such as AMP, GMP, CMP, UMP. Allosterically inhibited by the polyamines such as spermidine and putrescine. Its function is as follows. Involved in the catabolism of arginine. Catalyzes the phosphorolysis of citrulline, the reverse reaction of the biosynthetic one, yielding ornithine and carbamoyl phosphate which serve to generate ATP from ADP. This catabolic OTCase does not carry out the biosynthetic reaction because of a poor affinity and a marked cooperativity for carbamoyl phosphate. The sequence is that of Ornithine carbamoyltransferase, catabolic from Pseudomonas aeruginosa (strain ATCC 15692 / DSM 22644 / CIP 104116 / JCM 14847 / LMG 12228 / 1C / PRS 101 / PAO1).